We begin with the raw amino-acid sequence, 410 residues long: DNA replication and repair protein RecF (410 aa).

30–37 (GPNGHGKT) serves as a coordination point for ATP.

It belongs to the RecF family.

It is found in the cytoplasm. The RecF protein is involved in DNA metabolism; it is required for DNA replication and normal SOS inducibility. RecF binds preferentially to single-stranded, linear DNA. It also seems to bind ATP. The protein is DNA replication and repair protein RecF of Rhodococcus jostii (strain RHA1).